Consider the following 223-residue polypeptide: PKHD-type hydroxylase syc1482_d (223 aa).

A Fe2OG dioxygenase domain is found at 78-176 (RVHSLLFSRY…RFACVGWVQS (99 aa)). Fe cation contacts are provided by histidine 96, aspartate 98, and histidine 157. Arginine 167 is a binding site for 2-oxoglutarate.

Fe(2+) is required as a cofactor. It depends on L-ascorbate as a cofactor.

This is PKHD-type hydroxylase syc1482_d from Synechococcus sp. (strain ATCC 27144 / PCC 6301 / SAUG 1402/1) (Anacystis nidulans).